Consider the following 153-residue polypeptide: Insulin-like growth factor 1 (153 aa).

The tract at residues 49-77 is b; it reads GPETLCGAELVDALQFVCGDRGFYFNKPT. 3 cysteine pairs are disulfide-bonded: cysteine 54–cysteine 96, cysteine 66–cysteine 109, and cysteine 95–cysteine 100. Residues 78 to 89 are c; it reads GYGSSSRRAPQT. The segment at 90 to 110 is a; the sequence is GIVDECCFRSCDLRRLEMYCA. The tract at residues 111-118 is d; the sequence is PLKPAKSA. The propeptide at 119–153 is e peptide; the sequence is RSVRAQRHTDMPKAQKEVHLKNTSRGSSGNKNYRM. The interval 120–153 is disordered; that stretch reads SVRAQRHTDMPKAQKEVHLKNTSRGSSGNKNYRM. Basic and acidic residues predominate over residues 125–138; it reads RHTDMPKAQKEVHL. The span at 139 to 153 shows a compositional bias: polar residues; that stretch reads KNTSRGSSGNKNYRM.

It belongs to the insulin family. In terms of assembly, forms a ternary complex with IGFR1 and ITGAV:ITGB3. Forms a ternary complex with IGFR1 and ITGA6:ITGB4. Forms a ternary complex with IGFBP3 and ALS.

It localises to the secreted. Its function is as follows. The insulin-like growth factors, isolated from plasma, are structurally and functionally related to insulin but have a much higher growth-promoting activity. May be a physiological regulator of [1-14C]-2-deoxy-D-glucose (2DG) transport and glycogen synthesis in osteoblasts. Stimulates glucose transport in bone-derived osteoblastic (PyMS) cells and is effective at much lower concentrations than insulin, not only regarding glycogen and DNA synthesis but also with regard to enhancing glucose uptake. May play a role in synapse maturation. Ca(2+)-dependent exocytosis of IGF1 is required for sensory perception of smell in the olfactory bulb. Acts as a ligand for IGF1R. Binds to the alpha subunit of IGF1R, leading to the activation of the intrinsic tyrosine kinase activity which autophosphorylates tyrosine residues in the beta subunit thus initiating a cascade of down-stream signaling events leading to activation of the PI3K-AKT/PKB and the Ras-MAPK pathways. Binds to integrins ITGAV:ITGB3 and ITGA6:ITGB4. Its binding to integrins and subsequent ternary complex formation with integrins and IGFR1 are essential for IGF1 signaling. Induces the phosphorylation and activation of IGFR1, MAPK3/ERK1, MAPK1/ERK2 and AKT1. As part of the MAPK/ERK signaling pathway, acts as a negative regulator of apoptosis in cardiomyocytes via promotion of STUB1/CHIP-mediated ubiquitination and degradation of ICER-type isoforms of CREM. The sequence is that of Insulin-like growth factor 1 from Sus scrofa (Pig).